We begin with the raw amino-acid sequence, 224 residues long: Charged multivesicular body protein 4c (224 aa).

2 disordered regions span residues 1–21 (MSVF…PTPQ) and 182–224 (SGPE…AWAM). The segment covering 7–17 (LFGGGGKGGKG) has biased composition (gly residues). Residues 21–221 (QEAIQKLRET…DEDDMEELKA (201 aa)) adopt a coiled-coil conformation.

This sequence belongs to the SNF7 family. As to quaternary structure, probable core component of the endosomal sorting required for transport complex III (ESCRT-III). ESCRT-III components are thought to multimerize to form a flat lattice on the perimeter membrane of the endosome.

It localises to the cytoplasm. Its subcellular location is the cytosol. It is found in the late endosome membrane. Functionally, probable core component of the endosomal sorting required for transport complex III (ESCRT-III) which is involved in multivesicular bodies (MVBs) formation and sorting of endosomal cargo proteins into MVBs. MVBs contain intraluminal vesicles (ILVs) that are generated by invagination and scission from the limiting membrane of the endosome and mostly are delivered to lysosomes enabling degradation of membrane proteins, such as stimulated growth factor receptors, lysosomal enzymes and lipids. Key component of the cytokinesis checkpoint, a process required to delay abscission to prevent both premature resolution of intercellular chromosome bridges and accumulation of DNA damage. In Danio rerio (Zebrafish), this protein is Charged multivesicular body protein 4c (chmp4c).